Here is a 225-residue protein sequence, read N- to C-terminus: 2-C-methyl-D-erythritol 4-phosphate cytidylyltransferase (225 aa).

Belongs to the IspD/TarI cytidylyltransferase family. IspD subfamily.

It carries out the reaction 2-C-methyl-D-erythritol 4-phosphate + CTP + H(+) = 4-CDP-2-C-methyl-D-erythritol + diphosphate. Its pathway is isoprenoid biosynthesis; isopentenyl diphosphate biosynthesis via DXP pathway; isopentenyl diphosphate from 1-deoxy-D-xylulose 5-phosphate: step 2/6. Functionally, catalyzes the formation of 4-diphosphocytidyl-2-C-methyl-D-erythritol from CTP and 2-C-methyl-D-erythritol 4-phosphate (MEP). This chain is 2-C-methyl-D-erythritol 4-phosphate cytidylyltransferase, found in Prochlorococcus marinus (strain NATL2A).